The primary structure comprises 949 residues: Bifunctional glutamine synthetase adenylyltransferase/adenylyl-removing enzyme (949 aa).

The adenylyl removase stretch occupies residues 1-450 (MQNQGNKVLS…HFNATVGGTD (450 aa)). The adenylyl transferase stretch occupies residues 455-949 (NDHWTALFWN…IEIYNEILAI (495 aa)).

It belongs to the GlnE family. Requires Mg(2+) as cofactor.

It catalyses the reaction [glutamine synthetase]-O(4)-(5'-adenylyl)-L-tyrosine + phosphate = [glutamine synthetase]-L-tyrosine + ADP. The catalysed reaction is [glutamine synthetase]-L-tyrosine + ATP = [glutamine synthetase]-O(4)-(5'-adenylyl)-L-tyrosine + diphosphate. In terms of biological role, involved in the regulation of glutamine synthetase GlnA, a key enzyme in the process to assimilate ammonia. When cellular nitrogen levels are high, the C-terminal adenylyl transferase (AT) inactivates GlnA by covalent transfer of an adenylyl group from ATP to specific tyrosine residue of GlnA, thus reducing its activity. Conversely, when nitrogen levels are low, the N-terminal adenylyl removase (AR) activates GlnA by removing the adenylyl group by phosphorolysis, increasing its activity. The regulatory region of GlnE binds the signal transduction protein PII (GlnB) which indicates the nitrogen status of the cell. In Shewanella frigidimarina (strain NCIMB 400), this protein is Bifunctional glutamine synthetase adenylyltransferase/adenylyl-removing enzyme.